The primary structure comprises 122 residues: uncharacterized protein (122 aa).

Belongs to the phage O protein family.

This is an uncharacterized protein from Escherichia coli O6:H1 (strain CFT073 / ATCC 700928 / UPEC).